Here is a 105-residue protein sequence, read N- to C-terminus: Integration host factor subunit alpha (105 aa).

Belongs to the bacterial histone-like protein family. As to quaternary structure, heterodimer of an alpha and a beta chain.

This protein is one of the two subunits of integration host factor, a specific DNA-binding protein that functions in genetic recombination as well as in transcriptional and translational control. The sequence is that of Integration host factor subunit alpha from Xanthobacter autotrophicus (strain ATCC BAA-1158 / Py2).